Reading from the N-terminus, the 838-residue chain is Protein translocase subunit SecA 1 (838 aa).

ATP is bound by residues Gln-85, 103 to 107, and Asp-493; that span reads GEGKT. Zn(2+)-binding residues include Cys-823, Cys-825, Cys-834, and His-835.

Belongs to the SecA family. As to quaternary structure, monomer and homodimer. Part of the essential Sec protein translocation apparatus which comprises SecA, SecYEG and auxiliary proteins SecDF. Other proteins may also be involved. Requires Zn(2+) as cofactor.

It is found in the cell membrane. The protein resides in the cytoplasm. It catalyses the reaction ATP + H2O + cellular proteinSide 1 = ADP + phosphate + cellular proteinSide 2.. Functionally, part of the Sec protein translocase complex. Interacts with the SecYEG preprotein conducting channel. Has a central role in coupling the hydrolysis of ATP to the transfer of proteins into and across the cell membrane, serving as an ATP-driven molecular motor driving the stepwise translocation of polypeptide chains across the membrane. The sequence is that of Protein translocase subunit SecA 1 from Streptococcus gordonii.